The following is a 172-amino-acid chain: Small ribosomal subunit protein uS5 (172 aa).

Residues Leu-17 to Val-80 form the S5 DRBM domain.

Belongs to the universal ribosomal protein uS5 family. Part of the 30S ribosomal subunit. Contacts proteins S4 and S8.

In terms of biological role, with S4 and S12 plays an important role in translational accuracy. Functionally, located at the back of the 30S subunit body where it stabilizes the conformation of the head with respect to the body. The chain is Small ribosomal subunit protein uS5 from Paraburkholderia phytofirmans (strain DSM 17436 / LMG 22146 / PsJN) (Burkholderia phytofirmans).